A 610-amino-acid chain; its full sequence is UvrABC system protein C (610 aa).

In terms of domain architecture, GIY-YIG spans 16-94 (SQPGVYRMYD…IKLYQPRYNV (79 aa)). The UVR domain maps to 204 to 239 (DQVLTQLIARMEKASQDLAFEEAARIRDQIQAVRRV).

It belongs to the UvrC family. In terms of assembly, interacts with UvrB in an incision complex.

Its subcellular location is the cytoplasm. In terms of biological role, the UvrABC repair system catalyzes the recognition and processing of DNA lesions. UvrC both incises the 5' and 3' sides of the lesion. The N-terminal half is responsible for the 3' incision and the C-terminal half is responsible for the 5' incision. This chain is UvrABC system protein C, found in Salmonella paratyphi A (strain ATCC 9150 / SARB42).